The chain runs to 312 residues: Acyl-CoA C20 Delta5-desaturase (312 aa).

A run of 2 helical transmembrane segments spans residues Val-45–Phe-65 and Ser-69–Phe-89. Residues His-90, His-95, His-127, His-130, and His-131 each contribute to the Fe cation site. Positions His-90–His-95 match the Histidine box-1 motif. Positions His-127–His-131 match the Histidine box-2 motif. Residues Leu-193–Val-213 traverse the membrane as a helical segment. Residues His-230, His-259, His-262, and His-263 each contribute to the Fe cation site. Positions His-259 to His-263 match the Histidine box-3 motif.

This sequence belongs to the fatty acid desaturase type 1 family. Requires Fe(2+) as cofactor.

It is found in the membrane. It carries out the reaction (11Z,14Z)-eicosadienoyl-CoA + AH2 + O2 = (5Z,11Z,14Z)-eicosatrienoyl-CoA + A + 2 H2O. The enzyme catalyses (11Z,14Z,17Z)-eicosatrienoyl-CoA + AH2 + O2 = (5Z,11Z,14Z,17Z)-eicosatetraenoyl-CoA + A + 2 H2O. It functions in the pathway lipid metabolism; polyunsaturated fatty acid biosynthesis. Functionally, catalyzes the desaturation of 20:2Delta(11,14) and 20:3Delta(11,14,17) to generate sciadonic acid (20:3Delta(5,11,14)) and juniperonic acid (20:4Delta(5,11,14,17)). The polypeptide is Acyl-CoA C20 Delta5-desaturase (Anemone leveillei (Windflower)).